We begin with the raw amino-acid sequence, 971 residues long: Endoplasmic reticulum calcium ATPase srcA (971 aa).

The Cytoplasmic portion of the chain corresponds to 1–25; that stretch reads MNNEALAEDPPTPLWELVLEQFKDQ. The helical transmembrane segment at 26–46 threads the bilayer; it reads LVLILLGSAAVSFVLALFEEG. The Lumenal portion of the chain corresponds to 47 to 49; it reads DDW. A helical membrane pass occupies residues 50 to 70; that stretch reads TAFVDPVVILTILILNAVVGV. Topologically, residues 71–217 are cytoplasmic; that stretch reads TQESSAEKAI…PTPLKQKLND (147 aa). Residues 218–238 traverse the membrane as a helical segment; it reads FGDMLAKVITVICVLVWLINV. The Lumenal portion of the chain corresponds to 239–262; that stretch reads EHFNDPAHGGWAKGAIYYLKIAVS. A helical transmembrane segment spans residues 263 to 283; that stretch reads LGVAAIPEGLAVVITTCLALG. The Ca(2+) site is built by V265, A266, I268, and E270. The Cytoplasmic segment spans residues 284–718; it reads TRKMAAKNAV…GRSIYSNTQQ (435 aa). D312 functions as the 4-aspartylphosphate intermediate in the catalytic mechanism. Residues D312 and T314 each contribute to the Mg(2+) site. The ATP site is built by T314, E402, R453, K473, R518, R637, and K643. D662 contributes to the Mg(2+) binding site. Position 665 (N665) interacts with ATP. Residues 719–741 traverse the membrane as a helical segment; the sequence is FIRYLISSNIGEVVSIFLTAALG. Ca(2+)-binding residues include N727 and E730. Residues 742-750 are Lumenal-facing; the sequence is MPEALIPVQ. A helical transmembrane segment spans residues 751 to 770; that stretch reads LLWVNLVTDGLPATALSFNP. Residues N755, T758, and D759 each contribute to the Ca(2+) site. Residues 771–795 are Cytoplasmic-facing; it reads PDHDVMRRAPRKRDEPLVGGWLLFR. Residues 796-816 form a helical membrane-spanning segment; the sequence is YLAIGTYVGAATVFGYIWWFV. The Lumenal segment spans residues 817 to 854; it reads YNPEGPQISFWQLSHFHKCSAQFPEIGCEMFSNEMSRS. A helical transmembrane segment spans residues 855–875; sequence ASTVSLSILVVIEMLNAMNAL. E867 serves as a coordination point for Ca(2+). The Cytoplasmic portion of the chain corresponds to 876 to 891; that stretch reads SSSESLLAFPLWNNMM. A helical transmembrane segment spans residues 892 to 912; that stretch reads LVYAIILSMTLHFAILYIPFL. Residues 913–917 are Lumenal-facing; sequence QTLFS. The helical transmembrane segment at 918–938 threads the bilayer; sequence ILPLNWTEWKAVLAISAPVVA. At 939-971 the chain is on the cytoplasmic side; that stretch reads IDELLKYAERRLYTLPAIAGEQQNGVAFKPKKA.

Belongs to the cation transport ATPase (P-type) (TC 3.A.3) family. It depends on Mg(2+) as a cofactor.

It localises to the endoplasmic reticulum membrane. The catalysed reaction is Ca(2+)(in) + ATP + H2O = Ca(2+)(out) + ADP + phosphate + H(+). In terms of biological role, magnesium-dependent enzyme catalyzes the hydrolysis of ATP coupled with the translocation of calcium from the cytosol to the endoplasmic reticulum lumen. Its activity is coupled to the unfolded protein response (UPR) and Ca(2+) import into the endoplasmioc reticulum is important for redox homeostasis, virulence, cell wall biosynthesis, and resistance to antifungal compounds that inhibit Ca2+ signaling. With pmrA, promotes radial growth and conidiation. This Aspergillus fumigatus (strain ATCC MYA-4609 / CBS 101355 / FGSC A1100 / Af293) (Neosartorya fumigata) protein is Endoplasmic reticulum calcium ATPase srcA (srcA).